The sequence spans 452 residues: Caspase-2 (452 aa).

Residue Ala-2 is modified to N-acetylalanine. Positions 2 to 169 (AASSGRSQSS…TMEHSLDNGD (168 aa)) are excised as a propeptide. The 90-residue stretch at 32 to 121 (MHPDHQETLK…GHLEDLLLTT (90 aa)) folds into the CARD domain. Residue Ser-157 is modified to Phosphoserine. Catalysis depends on residues His-277 and Cys-320. Positions 326 to 333 (DRGVDQQD) are excised as a propeptide. Residues 327–336 (RGVDQQDGKN) show a composition bias toward basic and acidic residues. A disordered region spans residues 327 to 349 (RGVDQQDGKNHAQSPGCEESDAG). Ser-340 carries the post-translational modification Phosphoserine.

The protein belongs to the peptidase C14A family. In terms of assembly, heterotetramer that consists of two anti-parallel arranged heterodimers, each one formed by a p18 subunit and a p12 subunit. Forms a complex named the PIDDosome with PIDD1 and CRADD. Interacts with NOL3 (via CARD domain); inhibits CASP2 activity in a phosphorylation-dependent manner. Post-translationally, the mature protease can process its own propeptide, but not that of other caspases.

The catalysed reaction is Strict requirement for an Asp residue at P1, with 316-Asp being essential for proteolytic activity and has a preferred cleavage sequence of Val-Asp-Val-Ala-Asp-|-.. Its function is as follows. Involved in the activation cascade of caspases responsible for apoptosis execution. Might function by either activating some proteins required for cell death or inactivating proteins necessary for cell survival. Associates with PIDD1 and CRADD to form the PIDDosome, a complex that activates CASP2 and triggers apoptosis in response to genotoxic stress. The chain is Caspase-2 (Casp2) from Rattus norvegicus (Rat).